The primary structure comprises 419 residues: Cyclin-B2-2 (419 aa).

A disordered region spans residues 79–116 (QPSSAPLAPIGSERQKRTADSAFHGPADMECTKITSDD).

Belongs to the cyclin family. Cyclin AB subfamily. In terms of assembly, interacts with CDKB2-1. As to expression, expressed in the intercalary meristem and the elongation zone of internodes. Expressed in adventitious roots at all nodes under submergence conditions.

The protein resides in the nucleus. Involved in the control of the cell cycle at the G2/M (mitosis) transition. May associate to CDKB2-1 and activate CDKB2-1 kinase to promote cell division. This is Cyclin-B2-2 (CYCB2-2) from Oryza sativa subsp. indica (Rice).